The following is a 342-amino-acid chain: Nuclear distribution protein nudE homolog 1 (342 aa).

A coiled-coil region spans residues 45–189; it reads REYEAELETQ…ELAVQQKQEK (145 aa). The segment at 89–157 is interaction with PAFAH1B1; the sequence is EWYRQVSALE…ERNAFLESEL (69 aa). 2 disordered regions span residues 182 to 203 and 320 to 342; these read AVQQ…TERT and GTRP…KMLL. Over residues 322 to 342 the composition is skewed to polar residues; it reads RPSSTPGPMSHPSQSVVKMLL.

The protein belongs to the nudE family. As to quaternary structure, self-associates. Interacts with PAFAH1B1. Phosphorylated in mitosis.

The protein resides in the cytoplasm. It localises to the cytoskeleton. The protein localises to the microtubule organizing center. Its subcellular location is the centrosome. It is found in the spindle. The protein resides in the chromosome. It localises to the centromere. The protein localises to the kinetochore. Its subcellular location is the cleavage furrow. It is found in the cytoplasmic vesicle membrane. Functionally, required for centrosome duplication and formation and function of the mitotic spindle. The chain is Nuclear distribution protein nudE homolog 1 (NDE1) from Gallus gallus (Chicken).